We begin with the raw amino-acid sequence, 213 residues long: Retinitis pigmentosa 9 protein homolog (213 aa).

Residues 1 to 61 (MSSGAGSRRP…IKEDETKPED (61 aa)) form a disordered region. Residues 1-147 (MSSGAGSRRP…RENKRHEKDV (147 aa)) are PIM1-binding. 2 stretches are compositionally biased toward basic and acidic residues: residues 9-21 (RPRE…LQRR) and 52-61 (IKEDETKPED). The CCHC-type zinc-finger motif lies at 96–114 (QCWRCKRYGHRTGDKECPF). Lysine 121 participates in a covalent cross-link: Glycyl lysine isopeptide (Lys-Gly) (interchain with G-Cter in SUMO2). Positions 154 to 213 (QLLEDSTSDDDGSSSSSSGDREKRKKRKKKEKHKKRKKEKKKKKKRKHKASKSSESSDSE) are disordered. Residues 176–204 (KRKKRKKKEKHKKRKKEKKKKKKRKHKAS) show a composition bias toward basic residues. Phosphoserine; by PIM1; in vitro is present on residues serine 204 and serine 206.

As to quaternary structure, binds to PIM1. Binds to ZNHIT4. In terms of tissue distribution, highly expressed in the testis, moderately in the kidney, liver and spleen, and weakly in the skeletal muscle and heart.

The protein resides in the nucleus. Is thought to be a target protein for the PIM1 kinase. May play some roles in B-cell proliferation in association with PIM1. In Mus musculus (Mouse), this protein is Retinitis pigmentosa 9 protein homolog (rp9).